The following is a 162-amino-acid chain: MRLVVQRVLEAGVRVDDTPVATIGTGLLVLAGFGKDDDETLPDSRRWNAMCDKLIDLRIFPDAEGRMNRSLREHGGEVLLVSQFTLYADLRRGRRPSFQTAAPPDTARNLYERLVHDIDARLPGRVSSGIFGALMHVSLINWGPVTLCLDDAELFPEASVAG.

The Gly-cisPro motif, important for rejection of L-amino acids signature appears at G143–P144.

Belongs to the DTD family. In terms of assembly, homodimer.

The protein localises to the cytoplasm. The catalysed reaction is glycyl-tRNA(Ala) + H2O = tRNA(Ala) + glycine + H(+). It carries out the reaction a D-aminoacyl-tRNA + H2O = a tRNA + a D-alpha-amino acid + H(+). In terms of biological role, an aminoacyl-tRNA editing enzyme that deacylates mischarged D-aminoacyl-tRNAs. Also deacylates mischarged glycyl-tRNA(Ala), protecting cells against glycine mischarging by AlaRS. Acts via tRNA-based rather than protein-based catalysis; rejects L-amino acids rather than detecting D-amino acids in the active site. By recycling D-aminoacyl-tRNA to D-amino acids and free tRNA molecules, this enzyme counteracts the toxicity associated with the formation of D-aminoacyl-tRNA entities in vivo and helps enforce protein L-homochirality. This chain is D-aminoacyl-tRNA deacylase, found in Nitratidesulfovibrio vulgaris (strain ATCC 29579 / DSM 644 / CCUG 34227 / NCIMB 8303 / VKM B-1760 / Hildenborough) (Desulfovibrio vulgaris).